The following is a 206-amino-acid chain: Urease accessory protein UreG (206 aa).

12–19 (GPVGSGKT) provides a ligand contact to GTP.

This sequence belongs to the SIMIBI class G3E GTPase family. UreG subfamily. As to quaternary structure, homodimer. UreD, UreF and UreG form a complex that acts as a GTP-hydrolysis-dependent molecular chaperone, activating the urease apoprotein by helping to assemble the nickel containing metallocenter of UreC. The UreE protein probably delivers the nickel.

The protein resides in the cytoplasm. Its function is as follows. Facilitates the functional incorporation of the urease nickel metallocenter. This process requires GTP hydrolysis, probably effectuated by UreG. This Synechocystis sp. (strain ATCC 27184 / PCC 6803 / Kazusa) protein is Urease accessory protein UreG.